The chain runs to 843 residues: Protein kintoun (843 aa).

Disordered stretches follow at residues 212-242 (PTAE…VHPM), 371-417 (FSRE…PVHS), 545-672 (YTVK…GASQ), and 761-843 (KKNQ…DDVM). At serine 376 the chain carries Phosphoserine. Residues 387–397 (PVEEEEADADL) are compositionally biased toward acidic residues. Basic and acidic residues predominate over residues 564–573 (VKFDHNKESL). Residues 584–593 (TEEDEVEEQH) are compositionally biased toward acidic residues. Positions 605-619 (QNKKPSKKQRKRNKK) are enriched in basic residues. Polar residues predominate over residues 658–671 (YSECNDSSVGSGAS). Over residues 761–775 (KKNQKRRDLKLRAQQ) the composition is skewed to basic residues. Phosphoserine is present on serine 779.

The protein belongs to the PIH1 family. Kintoun subfamily. Interacts with Pp1alpha-96A, Pp1-87B, Pp1-13C and flw.

The protein localises to the cytoplasm. In terms of biological role, required for cytoplasmic pre-assembly of axonemal dyneins, thereby playing a central role in motility in cilia and flagella. Involved in pre-assembly of dynein arm complexes in the cytoplasm before intraflagellar transport loads them for the ciliary compartment. The protein is Protein kintoun of Drosophila ananassae (Fruit fly).